The chain runs to 244 residues: Probable transcriptional regulatory protein CHAB381_1426 (244 aa).

Belongs to the TACO1 family.

Its subcellular location is the cytoplasm. The chain is Probable transcriptional regulatory protein CHAB381_1426 from Campylobacter hominis (strain ATCC BAA-381 / DSM 21671 / CCUG 45161 / LMG 19568 / NCTC 13146 / CH001A).